The chain runs to 440 residues: IAA-amino acid hydrolase ILR1-like 4 (440 aa).

Residues 1-23 form the signal peptide; that stretch reads MSFFKWVSFVLILHLLNPTLISC. Mn(2+)-binding residues include Cys-134, His-136, Glu-170, His-194, and His-397. Positions 437 to 440 match the Prevents secretion from ER motif; it reads KDEL.

This sequence belongs to the peptidase M20 family. It depends on Mn(2+) as a cofactor. In terms of tissue distribution, expressed in leaves, stems, roots, siliques and flowers. Detected in the vascular tissue of cotyledons and roots, in adult leaves, stems, siliques, petals, hydathodes and in silique abscission zones and funicles.

The protein resides in the endoplasmic reticulum lumen. The catalysed reaction is a jasmonyl-L-amino acid + H2O = a jasmonate + an L-alpha-amino acid. Hydrolyzes certain amino acid conjugates of the plant growth regulator indole-3-acetic acid (IAA), including IAA-Ala, IAA-Asn, IAA-Cys, IAA-Glu, IAA-Met, IAA-Ser and IAA-Gly. Has a lower efficiency with IAA-Phe, IAA-Leu and IAA-Val and no activity with IAA-Ile. Important for IAA-Leu hydrolysis in roots. Also hydrolyzes amino acid conjugates of jasmonic acid and 12-hydroxy jasmonic acid. The protein is IAA-amino acid hydrolase ILR1-like 4 of Arabidopsis thaliana (Mouse-ear cress).